We begin with the raw amino-acid sequence, 129 residues long: MPTVEYLNYEVVDDNGWDMYDDDVFGEASDMDLDDEDYGSLEVNEGEYILEAAEAQGYDWPFSCRAGACANCAAIVLEGDIDMDMQQILSDEEVEDKNVRLTCIGSPDADEVKIVYNAKHLDYLQNRVI.

In terms of domain architecture, 2Fe-2S ferredoxin-type spans 29–120 (SDMDLDDEDY…EVKIVYNAKH (92 aa)). Positions 64, 69, 72, and 103 each coordinate [2Fe-2S] cluster.

This sequence belongs to the 2Fe2S plant-type ferredoxin family. Requires [2Fe-2S] cluster as cofactor.

In terms of biological role, ferredoxins are iron-sulfur proteins that transfer electrons in a wide variety of metabolic reactions. This chain is Ferredoxin-1 (fer1), found in Haloarcula marismortui (strain ATCC 43049 / DSM 3752 / JCM 8966 / VKM B-1809) (Halobacterium marismortui).